Here is a 338-residue protein sequence, read N- to C-terminus: Fructose-1,6-bisphosphatase class 1 (338 aa).

Glu92, Asp115, Leu117, and Asp118 together coordinate Mg(2+). Substrate-binding positions include 118 to 121, Asn211, Tyr244, 262 to 264, and Lys274; these read DGSS and YLY. Glu280 contributes to the Mg(2+) binding site.

Belongs to the FBPase class 1 family. In terms of assembly, homotetramer. The cofactor is Mg(2+).

The protein resides in the cytoplasm. It carries out the reaction beta-D-fructose 1,6-bisphosphate + H2O = beta-D-fructose 6-phosphate + phosphate. It functions in the pathway carbohydrate biosynthesis; gluconeogenesis. The polypeptide is Fructose-1,6-bisphosphatase class 1 (Vibrio parahaemolyticus serotype O3:K6 (strain RIMD 2210633)).